Here is a 534-residue protein sequence, read N- to C-terminus: Bifunctional purine biosynthesis protein PurH (534 aa).

One can recognise an MGS-like domain in the interval 6-151; that stretch reads TRLPVRRALI…KNHKDVAIVV (146 aa).

Belongs to the PurH family.

The enzyme catalyses (6R)-10-formyltetrahydrofolate + 5-amino-1-(5-phospho-beta-D-ribosyl)imidazole-4-carboxamide = 5-formamido-1-(5-phospho-D-ribosyl)imidazole-4-carboxamide + (6S)-5,6,7,8-tetrahydrofolate. The catalysed reaction is IMP + H2O = 5-formamido-1-(5-phospho-D-ribosyl)imidazole-4-carboxamide. It functions in the pathway purine metabolism; IMP biosynthesis via de novo pathway; 5-formamido-1-(5-phospho-D-ribosyl)imidazole-4-carboxamide from 5-amino-1-(5-phospho-D-ribosyl)imidazole-4-carboxamide (10-formyl THF route): step 1/1. The protein operates within purine metabolism; IMP biosynthesis via de novo pathway; IMP from 5-formamido-1-(5-phospho-D-ribosyl)imidazole-4-carboxamide: step 1/1. The sequence is that of Bifunctional purine biosynthesis protein PurH from Stutzerimonas stutzeri (strain A1501) (Pseudomonas stutzeri).